The sequence spans 461 residues: Anthranilate synthase component 1 (461 aa).

Residues Ser43 and 238–240 (PYM) contribute to the L-tryptophan site. Residue 273–274 (GT) participates in chorismate binding. Position 300 (Glu300) interacts with Mg(2+). Chorismate-binding positions include Tyr388, Arg408, 422-424 (GAG), and Gly424. Residue Glu437 coordinates Mg(2+).

It belongs to the anthranilate synthase component I family. In terms of assembly, heterotetramer consisting of two non-identical subunits: a beta subunit (TrpG) and a large alpha subunit (TrpE). Mg(2+) serves as cofactor.

It carries out the reaction chorismate + L-glutamine = anthranilate + pyruvate + L-glutamate + H(+). Its pathway is amino-acid biosynthesis; L-tryptophan biosynthesis; L-tryptophan from chorismate: step 1/5. With respect to regulation, feedback inhibited by tryptophan. Its function is as follows. Part of a heterotetrameric complex that catalyzes the two-step biosynthesis of anthranilate, an intermediate in the biosynthesis of L-tryptophan. In the first step, the glutamine-binding beta subunit (TrpG) of anthranilate synthase (AS) provides the glutamine amidotransferase activity which generates ammonia as a substrate that, along with chorismate, is used in the second step, catalyzed by the large alpha subunit of AS (TrpE) to produce anthranilate. In the absence of TrpG, TrpE can synthesize anthranilate directly from chorismate and high concentrations of ammonia. In Methanothermobacter marburgensis (strain ATCC BAA-927 / DSM 2133 / JCM 14651 / NBRC 100331 / OCM 82 / Marburg) (Methanobacterium thermoautotrophicum), this protein is Anthranilate synthase component 1 (trpE).